The following is a 297-amino-acid chain: F-box only protein 2 (297 aa).

A disordered region spans residues 1 to 47 (MDGDGDPESVSHPEEASPEEQPEEAGAEASAEEEQLREAEEEEEAEA). Residues 16–47 (ASPEEQPEEAGAEASAEEEQLREAEEEEEAEA) show a composition bias toward acidic residues. Positions 48–95 (VEYLAELPEPLLLRVLAELPATELVQACRLVCLRWKELVDGAPLWLLK) constitute an F-box domain. S106 bears the Phosphoserine mark. Positions 117 to 297 (FYFLSKRRRN…VTNSSVWVEP (181 aa)) constitute an FBA domain. A carbohydrate is bound by residues 214 to 216 (RTD) and 279 to 280 (YW).

Component of the SCF(FBXO2) complex consisting of CUL1, RBX1, SKP1 and FBXO2. Predominantly detected as heterodimer with SKP1; the heterodimer with SKP1 is not part of the SCF(FBXO2) complex. Detected in brain and cochlea, in epithelial support cells and hair cells of the organ of Corti (at protein level).

Its subcellular location is the cytoplasm. It is found in the microsome membrane. It participates in protein modification; protein ubiquitination. In terms of biological role, substrate recognition component of a SCF (SKP1-CUL1-F-box protein) E3 ubiquitin-protein ligase complex that mediates the ubiquitination and subsequent proteasomal degradation of target proteins. Involved in the endoplasmic reticulum-associated degradation pathway (ERAD) for misfolded lumenal proteins by recognizing and binding sugar chains on unfolded glycoproteins that are retrotranslocated into the cytosol and promoting their ubiquitination and subsequent degradation. Prevents formation of cytosolic aggregates of unfolded glycoproteins that have been retrotranslocated into the cytosol. Able to recognize and bind denatured glycoproteins, preferentially those of the high-mannose type. The sequence is that of F-box only protein 2 (Fbxo2) from Mus musculus (Mouse).